The chain runs to 295 residues: Gamma-glutamyl-L-1-hydroxyisopropylamide hydrolase (295 aa).

The Glutamine amidotransferase type-1 domain maps to 5–221; the sequence is RILICDGNTE…LRESARSLVE (217 aa). Cys104 serves as the catalytic Nucleophile. Catalysis depends on residues His200 and Glu202.

It carries out the reaction gamma-L-glutamyl-L-alaninol + H2O = L-alaninol + L-glutamate. In terms of biological role, involved in the degradation of isopropylamine, which is a constituent of the herbicides atrazine. Catalyzes the hydrolysis of gamma-glutamyl-L-alaninol (GALO) to L-alaninol and L-glutamate. It can also uses gamma-glutamyl-isopropylamide, gamma-glutamyl-ethylamide, L-glutamine, and gamma-glutamyl-p-nitroanilide. The chain is Gamma-glutamyl-L-1-hydroxyisopropylamide hydrolase (ipuF) from Pseudomonas sp.